Here is a 308-residue protein sequence, read N- to C-terminus: Acetyl-coenzyme A carboxylase carboxyl transferase subunit beta 1 (308 aa).

A CoA carboxyltransferase N-terminal domain is found at 25–294 (VWTKCTSCEQ…PLVVSVNESP (270 aa)). Zn(2+) is bound by residues Cys29, Cys32, Cys48, and Cys51. The C4-type zinc finger occupies 29–51 (CTSCEQVLYHAELERNLEVCPKC). The segment at 288–308 (VSVNESPNEEPYSVPEVDEKG) is disordered.

This sequence belongs to the AccD/PCCB family. As to quaternary structure, acetyl-CoA carboxylase is a heterohexamer composed of biotin carboxyl carrier protein (AccB), biotin carboxylase (AccC) and two subunits each of ACCase subunit alpha (AccA) and ACCase subunit beta (AccD). It depends on Zn(2+) as a cofactor.

The protein localises to the cytoplasm. It catalyses the reaction N(6)-carboxybiotinyl-L-lysyl-[protein] + acetyl-CoA = N(6)-biotinyl-L-lysyl-[protein] + malonyl-CoA. It functions in the pathway lipid metabolism; malonyl-CoA biosynthesis; malonyl-CoA from acetyl-CoA: step 1/1. In terms of biological role, component of the acetyl coenzyme A carboxylase (ACC) complex. Biotin carboxylase (BC) catalyzes the carboxylation of biotin on its carrier protein (BCCP) and then the CO(2) group is transferred by the transcarboxylase to acetyl-CoA to form malonyl-CoA. The sequence is that of Acetyl-coenzyme A carboxylase carboxyl transferase subunit beta 1 from Vibrio parahaemolyticus serotype O3:K6 (strain RIMD 2210633).